The sequence spans 278 residues: Thiazole synthase (278 aa).

The active-site Schiff-base intermediate with DXP is K107. 1-deoxy-D-xylulose 5-phosphate-binding positions include G168, 194–195 (AG), and 216–217 (AS).

This sequence belongs to the ThiG family. In terms of assembly, homotetramer. Forms heterodimers with either ThiH or ThiS.

The protein resides in the cytoplasm. The enzyme catalyses [ThiS sulfur-carrier protein]-C-terminal-Gly-aminoethanethioate + 2-iminoacetate + 1-deoxy-D-xylulose 5-phosphate = [ThiS sulfur-carrier protein]-C-terminal Gly-Gly + 2-[(2R,5Z)-2-carboxy-4-methylthiazol-5(2H)-ylidene]ethyl phosphate + 2 H2O + H(+). The protein operates within cofactor biosynthesis; thiamine diphosphate biosynthesis. Catalyzes the rearrangement of 1-deoxy-D-xylulose 5-phosphate (DXP) to produce the thiazole phosphate moiety of thiamine. Sulfur is provided by the thiocarboxylate moiety of the carrier protein ThiS. In vitro, sulfur can be provided by H(2)S. In Corynebacterium urealyticum (strain ATCC 43042 / DSM 7109), this protein is Thiazole synthase.